A 527-amino-acid chain; its full sequence is Ribosomal protein S6 kinase beta-1 (527 aa).

The interval 1 to 54 is disordered; sequence MRRRRRRDGFYPAPDFRDREAEDMAGVFDIDLDQPEDAGSEDELEEGGQLNESM. The TOS motif signature appears at 28 to 32; that stretch reads FDIDL. Positions 30–46 are enriched in acidic residues; the sequence is IDLDQPEDAGSEDELEE. Residues 91–352 form the Protein kinase domain; the sequence is FELLRVLGKG…AGEVQAHPFF (262 aa). Residues 97-105 and lysine 123 contribute to the ATP site; that span reads LGKGGYGKV. Aspartate 218 functions as the Proton acceptor in the catalytic mechanism. Threonine 252 is modified (phosphothreonine; by PDPK1). One can recognise an AGC-kinase C-terminal domain in the interval 353-423; sequence RHINWEELLA…VAPSVLESVK (71 aa). Residue serine 394 is modified to Phosphoserine. Threonine 412 bears the Phosphothreonine; by MTOR, NEK6 and NEK7 mark. The tract at residues 424-527 is autoinhibitory domain; that stretch reads EKFSFEPKIR…PEHLRMNLEL (104 aa). Phosphoserine is present on residues serine 434 and serine 441. Threonine 444 carries the post-translational modification Phosphothreonine. Serine 447 and serine 452 each carry phosphoserine. Lysine 516 carries the N6-acetyllysine modification.

This sequence belongs to the protein kinase superfamily. AGC Ser/Thr protein kinase family. S6 kinase subfamily. Interacts with PPP1R9A/neurabin-1. Interacts with RPTOR. Interacts with IRS1. Interacts with EIF3B and EIF3C. Interacts with TRAF4. Interacts with POLDIP3. Interacts (via N-terminus) with IER5. Phosphorylation at Thr-412 is regulated by mTORC1. The phosphorylation at this site is maintained by an agonist-dependent autophosphorylation mechanism. Activated by phosphorylation at Thr-252 by PDPK1. Dephosphorylation by PPP1CC at Thr-412 in mitochondrion.

Its subcellular location is the cytoplasm. The protein localises to the synapse. It localises to the synaptosome. The protein resides in the mitochondrion outer membrane. It is found in the mitochondrion. The catalysed reaction is L-seryl-[protein] + ATP = O-phospho-L-seryl-[protein] + ADP + H(+). It catalyses the reaction L-threonyl-[protein] + ATP = O-phospho-L-threonyl-[protein] + ADP + H(+). With respect to regulation, inactivated by binding to URI1. Activation requires multiple phosphorylation events on serine/threonine residues. Activation appears to be first mediated by phosphorylation of multiple sites in the autoinhibitory domain, which facilitates phosphorylation at Thr-412, disrupting the autoinhibitory mechanism and allowing phosphorylation of Thr-252 by PDPK1. The active conformation of the kinase is believed to be stabilized by a mechanism involving three conserved phosphorylation sites located in the kinase domain activation loop (Thr-252) and in the AGC-kinase C-terminal domain (Ser-394 in the middle of the tail/linker region and Thr-412 within a hydrophobic motif at its end). Activated by mTORC1; isoform Alpha I and isoform Alpha II are sensitive to rapamycin, which inhibits activating phosphorylation at Thr-412. Activated by PDPK1. Functionally, serine/threonine-protein kinase that acts downstream of mTOR signaling in response to growth factors and nutrients to promote cell proliferation, cell growth and cell cycle progression. Regulates protein synthesis through phosphorylation of EIF4B, RPS6 and EEF2K, and contributes to cell survival by repressing the pro-apoptotic function of BAD. Under conditions of nutrient depletion, the inactive form associates with the EIF3 translation initiation complex. Upon mitogenic stimulation, phosphorylation by the mechanistic target of rapamycin complex 1 (mTORC1) leads to dissociation from the EIF3 complex and activation. The active form then phosphorylates and activates several substrates in the pre-initiation complex, including the EIF2B complex and the cap-binding complex component EIF4B. Also controls translation initiation by phosphorylating a negative regulator of EIF4A, PDCD4, targeting it for ubiquitination and subsequent proteolysis. Promotes initiation of the pioneer round of protein synthesis by phosphorylating POLDIP3/SKAR. In response to IGF1, activates translation elongation by phosphorylating EEF2 kinase (EEF2K), which leads to its inhibition and thus activation of EEF2. Also plays a role in feedback regulation of mTORC2 by mTORC1 by phosphorylating MAPKAP1/SIN1, MTOR and RICTOR, resulting in the inhibition of mTORC2 and AKT1 signaling. Also involved in feedback regulation of mTORC1 and mTORC2 by phosphorylating DEPTOR. Mediates cell survival by phosphorylating the pro-apoptotic protein BAD and suppressing its pro-apoptotic function. Phosphorylates mitochondrial URI1 leading to dissociation of a URI1-PPP1CC complex. The free mitochondrial PPP1CC can then dephosphorylate RPS6KB1 at Thr-412, which is proposed to be a negative feedback mechanism for the RPS6KB1 anti-apoptotic function. Mediates TNF-alpha-induced insulin resistance by phosphorylating IRS1 at multiple serine residues, resulting in accelerated degradation of IRS1. In cells lacking functional TSC1-2 complex, constitutively phosphorylates and inhibits GSK3B. May be involved in cytoskeletal rearrangement through binding to neurabin. Phosphorylates and activates the pyrimidine biosynthesis enzyme CAD, downstream of MTOR. Following activation by mTORC1, phosphorylates EPRS and thereby plays a key role in fatty acid uptake by adipocytes and also most probably in interferon-gamma-induced translation inhibition. This is Ribosomal protein S6 kinase beta-1 (RPS6KB1) from Bos taurus (Bovine).